We begin with the raw amino-acid sequence, 248 residues long: Carboxy-S-adenosyl-L-methionine synthase (248 aa).

S-adenosyl-L-methionine contacts are provided by residues tyrosine 40, 65–67 (GCS), 95–96 (DN), 123–124 (DI), asparagine 138, and arginine 205.

It belongs to the class I-like SAM-binding methyltransferase superfamily. Cx-SAM synthase family. As to quaternary structure, homodimer.

The enzyme catalyses prephenate + S-adenosyl-L-methionine = carboxy-S-adenosyl-L-methionine + 3-phenylpyruvate + H2O. Catalyzes the conversion of S-adenosyl-L-methionine (SAM) to carboxy-S-adenosyl-L-methionine (Cx-SAM). The chain is Carboxy-S-adenosyl-L-methionine synthase from Hahella chejuensis (strain KCTC 2396).